The primary structure comprises 120 residues: Large ribosomal subunit protein uL22 (120 aa).

Belongs to the universal ribosomal protein uL22 family. Part of the 50S ribosomal subunit.

This protein binds specifically to 23S rRNA; its binding is stimulated by other ribosomal proteins, e.g. L4, L17, and L20. It is important during the early stages of 50S assembly. It makes multiple contacts with different domains of the 23S rRNA in the assembled 50S subunit and ribosome. In terms of biological role, the globular domain of the protein is located near the polypeptide exit tunnel on the outside of the subunit, while an extended beta-hairpin is found that lines the wall of the exit tunnel in the center of the 70S ribosome. In Crocosphaera subtropica (strain ATCC 51142 / BH68) (Cyanothece sp. (strain ATCC 51142)), this protein is Large ribosomal subunit protein uL22.